The chain runs to 556 residues: Formate--tetrahydrofolate ligase (556 aa).

Residue Thr65–Thr72 coordinates ATP.

Belongs to the formate--tetrahydrofolate ligase family.

It carries out the reaction (6S)-5,6,7,8-tetrahydrofolate + formate + ATP = (6R)-10-formyltetrahydrofolate + ADP + phosphate. It participates in one-carbon metabolism; tetrahydrofolate interconversion. The protein is Formate--tetrahydrofolate ligase of Clostridium cylindrosporum.